Here is a 202-residue protein sequence, read N- to C-terminus: Alpha-latrotoxin-Lm1a (202 aa).

10 ANK repeats span residues 95–109 (LYNAASNPDSAVGFK), 110–120 (LMESPEININE), 122–132 (NDWPVASTLLR), 133–138 (SSNVNV), 142–161 (NSDTPLNLAYFIDQGADINT), 163–170 (NGHLNIVK), 171–182 (YLVEEEDLSVDG), K184, 185–191 (YGIDMTI), and 193–202 (TALDIATDLK). A 4C4.1 epitope region spans residues 175 to 181 (EEDLSVD).

The protein belongs to the cationic peptide 01 (latrotoxin) family. 03 (alpha-latrotoxin) subfamily. Homotetramer in membranes. Processed by furin-like proteases at both the N- and C-termini. Post-translationally, contains 1 disulfide bond. Expressed in venom gland, cephalothorax, and abdomen tissues from both males and females.

Its subcellular location is the secreted. It is found in the target cell membrane. In terms of biological role, presynaptic neurotoxin that causes massive release of neurotransmitters from vertebrate (but not invertebrate) nerve terminals and endocrine cells via a complex mechanism involving activation of receptor(s) and toxin insertion into the plasma membrane with subsequent pore formation. Binds to neurexin-1-alpha (NRXN1) in a calcium dependent manner, adhesion G protein-coupled receptor L1 (ADGRL1, also termed latrophilin-1 and calcium-independent receptor of latrotoxin (CIRL)), and receptor-type tyrosine-protein phosphatase S (PTPRS), also termed PTP sigma. NRXN1 and PTPRS are suggested to provide a platform for binding and subsequent pore formation events. In contrast, binding to ADGRL1 does not involve oligomerization and channel formation, but direct downstream stimulation of the synaptic fusion machinery. The chain is Alpha-latrotoxin-Lm1a from Latrodectus mactans (Black widow spider).